The chain runs to 491 residues: Glycogen synthase (491 aa).

Arg-20 is a binding site for ADP-alpha-D-glucose.

The protein belongs to the glycosyltransferase 1 family. Bacterial/plant glycogen synthase subfamily.

It carries out the reaction [(1-&gt;4)-alpha-D-glucosyl](n) + ADP-alpha-D-glucose = [(1-&gt;4)-alpha-D-glucosyl](n+1) + ADP + H(+). The protein operates within glycan biosynthesis; glycogen biosynthesis. In terms of biological role, synthesizes alpha-1,4-glucan chains using ADP-glucose. In Prosthecochloris aestuarii (strain DSM 271 / SK 413), this protein is Glycogen synthase.